A 203-amino-acid polypeptide reads, in one-letter code: Cardiotrophin-2 (203 aa).

Positions 1–21 (MSCSLARLCLLTLLSPPLSSA) are cleaved as a signal peptide. The N-linked (GlcNAc...) asparagine glycan is linked to Asn-43.

It belongs to the IL-6 superfamily.

The protein localises to the secreted. Functionally, may have an important role in neuronal precursor development and maturation. This Pan troglodytes (Chimpanzee) protein is Cardiotrophin-2 (CTF2).